The chain runs to 23 residues: Malate dehydrogenase (23 aa).

Position 7 (asparagine 7) interacts with NAD(+). Residue arginine 23 participates in substrate binding.

Belongs to the LDH/MDH superfamily. MDH type 1 family. As to quaternary structure, homodimer.

The enzyme catalyses (S)-malate + NAD(+) = oxaloacetate + NADH + H(+). This Pseudotsuga menziesii (Douglas-fir) protein is Malate dehydrogenase.